We begin with the raw amino-acid sequence, 343 residues long: Heat-inducible transcription repressor HrcA (343 aa).

Belongs to the HrcA family.

Functionally, negative regulator of class I heat shock genes (grpE-dnaK-dnaJ and groELS operons). Prevents heat-shock induction of these operons. This chain is Heat-inducible transcription repressor HrcA, found in Thermoanaerobacter pseudethanolicus (strain ATCC 33223 / 39E) (Clostridium thermohydrosulfuricum).